A 313-amino-acid chain; its full sequence is Protein PHOSPHATE-INDUCED 1 (313 aa).

The first 22 residues, 1–22 (MATSHFILKLFLVISFCNVCFA), serve as a signal peptide directing secretion. N-linked (GlcNAc...) asparagine glycosylation is present at N119.

It belongs to the EXORDIUM family.

The protein resides in the secreted. It is found in the extracellular space. It localises to the apoplast. May be involved in the regulation of cell division. The protein is Protein PHOSPHATE-INDUCED 1 of Nicotiana tabacum (Common tobacco).